The chain runs to 371 residues: Cytochrome b (371 aa).

The next 4 membrane-spanning stretches (helical) occupy residues 25–45, 69–90, 105–125, and 170–190; these read FGSM…FLAV, WMMQ…YIHI, WMSG…GYVL, and FFAL…LHII. Heme b-binding residues include H75 and H89. Positions 174 and 188 each coordinate heme b. H193 serves as a coordination point for a ubiquinone. The next 4 helical transmembrane spans lie at 218-238, 280-300, 312-332, and 339-358; these read HKDL…SSFF, LGGA…PFTH, LSQL…WAAT, and FIVI…LSTP.

It belongs to the cytochrome b family. In terms of assembly, the cytochrome bc1 complex contains 3 respiratory subunits (MT-CYB, CYC1 and UQCRFS1), 2 core proteins (UQCRC1 and UQCRC2) and probably 6 low-molecular weight proteins. Requires heme b as cofactor.

It is found in the mitochondrion inner membrane. Functionally, component of the ubiquinol-cytochrome c reductase complex (complex III or cytochrome b-c1 complex) that is part of the mitochondrial respiratory chain. The b-c1 complex mediates electron transfer from ubiquinol to cytochrome c. Contributes to the generation of a proton gradient across the mitochondrial membrane that is then used for ATP synthesis. The sequence is that of Cytochrome b (MT-CYB) from Aspidites melanocephalus (Black-headed python).